The primary structure comprises 740 residues: Elongation factor 2 (740 aa).

A tr-type G domain is found at 23–264 (AQIRNAGTLA…MIIEHVPPPN (242 aa)). GTP-binding positions include 32–39 (AHVDHGKT), 98–102 (DTPGH), and 152–155 (NKID). Histidine 605 is subject to Diphthamide.

The protein belongs to the TRAFAC class translation factor GTPase superfamily. Classic translation factor GTPase family. EF-G/EF-2 subfamily.

It localises to the cytoplasm. In terms of biological role, catalyzes the GTP-dependent ribosomal translocation step during translation elongation. During this step, the ribosome changes from the pre-translocational (PRE) to the post-translocational (POST) state as the newly formed A-site-bound peptidyl-tRNA and P-site-bound deacylated tRNA move to the P and E sites, respectively. Catalyzes the coordinated movement of the two tRNA molecules, the mRNA and conformational changes in the ribosome. In Pyrobaculum neutrophilum (strain DSM 2338 / JCM 9278 / NBRC 100436 / V24Sta) (Thermoproteus neutrophilus), this protein is Elongation factor 2.